Here is an 804-residue protein sequence, read N- to C-terminus: Phenylalanine--tRNA ligase beta subunit (804 aa).

The tRNA-binding domain occupies 40–153 (PLPDLRVVVG…SSYAVGEPFA (114 aa)). The B5 domain occupies 400–476 (PALLVLPFRP…RLHGYDNIEA (77 aa)). D454, D460, E463, and E464 together coordinate Mg(2+). The FDX-ACB domain maps to 710 to 802 (SKFPAVQRDL…AESKLGAVIR (93 aa)).

It belongs to the phenylalanyl-tRNA synthetase beta subunit family. Type 1 subfamily. Tetramer of two alpha and two beta subunits. Requires Mg(2+) as cofactor.

It is found in the cytoplasm. The enzyme catalyses tRNA(Phe) + L-phenylalanine + ATP = L-phenylalanyl-tRNA(Phe) + AMP + diphosphate + H(+). The chain is Phenylalanine--tRNA ligase beta subunit from Chlorobium luteolum (strain DSM 273 / BCRC 81028 / 2530) (Pelodictyon luteolum).